A 370-amino-acid polypeptide reads, in one-letter code: NAD-dependent histone deacetylase HST4 (370 aa).

A disordered region spans residues 1–27 (MKQKFVLPITPPSTAEKKPQTENRCNE). Residues 15-27 (AEKKPQTENRCNE) show a composition bias toward basic and acidic residues. Residues 75 to 370 (RHHMDRDAGF…GDCQHVTSLL (296 aa)) form the Deacetylase sirtuin-type domain. NAD(+) contacts are provided by residues 100-119 (GAGI…EGIF) and 184-187 (QNID). H213 (proton acceptor) is an active-site residue. Residues C221, C224, C251, and C254 each contribute to the Zn(2+) site. NAD(+) is bound by residues 310-312 (GTS), 340-342 (NTS), and C363.

This sequence belongs to the sirtuin family. Class I subfamily. Zn(2+) is required as a cofactor.

It localises to the nucleus. It catalyses the reaction N(6)-acetyl-L-lysyl-[protein] + NAD(+) + H2O = 2''-O-acetyl-ADP-D-ribose + nicotinamide + L-lysyl-[protein]. Its function is as follows. NAD-dependent histone deacetylase, which contributes together with HST3 to histone H3 'Lys-56' deacetylation, regulation of telomeric silencing, proper cell cycle progression, DNA damage control, DNA recombination, and genomic maintenance. This is NAD-dependent histone deacetylase HST4 (HST4) from Saccharomyces cerevisiae (strain ATCC 204508 / S288c) (Baker's yeast).